The primary structure comprises 182 residues: Nucleoside triphosphate/diphosphate phosphatase (182 aa).

Arginine 27 acts as the Proton donor in catalysis. The Mg(2+) site is built by asparagine 91, aspartate 107, aspartate 109, aspartate 111, aspartate 124, and glutamate 127.

This sequence belongs to the Ntdp family. Requires Mg(2+) as cofactor.

The enzyme catalyses a ribonucleoside 5'-triphosphate + H2O = a ribonucleoside 5'-diphosphate + phosphate + H(+). It carries out the reaction a ribonucleoside 5'-diphosphate + H2O = a ribonucleoside 5'-phosphate + phosphate + H(+). Has nucleoside phosphatase activity towards nucleoside triphosphates and nucleoside diphosphates. The chain is Nucleoside triphosphate/diphosphate phosphatase from Lactiplantibacillus plantarum (strain ATCC BAA-793 / NCIMB 8826 / WCFS1) (Lactobacillus plantarum).